The primary structure comprises 202 residues: Small ribosomal subunit protein uS2 (202 aa).

It belongs to the universal ribosomal protein uS2 family.

This chain is Small ribosomal subunit protein uS2 (rps2), found in Pyrococcus horikoshii (strain ATCC 700860 / DSM 12428 / JCM 9974 / NBRC 100139 / OT-3).